A 427-amino-acid chain; its full sequence is Putative FBD-associated F-box protein At3g50710 (427 aa).

The 53-residue stretch at 1 to 53 folds into the F-box domain; sequence MDRISNLSDDLLLKIVSSLPTKDVVVTMLLSKRWKFLWMMVPKLRFDDEFELE. In terms of domain architecture, FBD spans 345–395; sequence HWEEPSSVPQCLLFHLNIFEWKYYNAGDEEKKVVAYILKNARQLKTATFSA.

The chain is Putative FBD-associated F-box protein At3g50710 from Arabidopsis thaliana (Mouse-ear cress).